A 194-amino-acid chain; its full sequence is Orotate phosphoribosyltransferase (194 aa).

5-phospho-alpha-D-ribose 1-diphosphate is bound by residues R102, K103, K106, H108, and 129–137 (EDVVTTGGS). The orotate site is built by T133 and R161.

It belongs to the purine/pyrimidine phosphoribosyltransferase family. PyrE subfamily. In terms of assembly, homodimer. The cofactor is Mg(2+).

It catalyses the reaction orotidine 5'-phosphate + diphosphate = orotate + 5-phospho-alpha-D-ribose 1-diphosphate. It participates in pyrimidine metabolism; UMP biosynthesis via de novo pathway; UMP from orotate: step 1/2. Catalyzes the transfer of a ribosyl phosphate group from 5-phosphoribose 1-diphosphate to orotate, leading to the formation of orotidine monophosphate (OMP). The sequence is that of Orotate phosphoribosyltransferase from Synechococcus sp. (strain CC9902).